The following is a 54-amino-acid chain: UPF0391 membrane protein Bpet1858 (54 aa).

Helical transmembrane passes span 5 to 25 (AVVF…GIAA) and 27 to 47 (AAGI…LSIL).

Belongs to the UPF0391 family.

Its subcellular location is the cell membrane. In Bordetella petrii (strain ATCC BAA-461 / DSM 12804 / CCUG 43448), this protein is UPF0391 membrane protein Bpet1858.